The primary structure comprises 358 residues: Replication factor C subunit 5 (358 aa).

The protein belongs to the activator 1 small subunits family. Heteropentamer of subunits rfc1, rfc2, rfc3, rfc4 and rfc5 that forms a complex (RFC) with PCNA in the presence of ATP. Two other complexes exist where rfc1 can be replaced by either ctf18 or elg1 to form the ctf18-RFC or the elg1-RFC complexes respectively.

It is found in the nucleus. Its function is as follows. The elongation of primed DNA templates by DNA polymerase delta and epsilon requires the action of the accessory proteins PCNA and activator 1. The sequence is that of Replication factor C subunit 5 (rfc5) from Schizosaccharomyces pombe (strain 972 / ATCC 24843) (Fission yeast).